We begin with the raw amino-acid sequence, 908 residues long: DNA mismatch repair protein MutS (908 aa).

Position 662-669 (662-669) interacts with ATP; it reads GPNMGGKS.

Belongs to the DNA mismatch repair MutS family.

In terms of biological role, this protein is involved in the repair of mismatches in DNA. It is possible that it carries out the mismatch recognition step. This protein has a weak ATPase activity. This chain is DNA mismatch repair protein MutS, found in Rhizobium etli (strain ATCC 51251 / DSM 11541 / JCM 21823 / NBRC 15573 / CFN 42).